Reading from the N-terminus, the 246-residue chain is Enolase-phosphatase E1 (246 aa).

2 residues coordinate Mg(2+): Asp-11 and Glu-13. Substrate-binding positions include 140-141 (SS) and Lys-174. Asp-199 lines the Mg(2+) pocket.

It belongs to the HAD-like hydrolase superfamily. MasA/MtnC family. Monomer. Requires Mg(2+) as cofactor.

It is found in the cytoplasm. The protein localises to the nucleus. It carries out the reaction 5-methylsulfanyl-2,3-dioxopentyl phosphate + H2O = 1,2-dihydroxy-5-(methylsulfanyl)pent-1-en-3-one + phosphate. The protein operates within amino-acid biosynthesis; L-methionine biosynthesis via salvage pathway; L-methionine from S-methyl-5-thio-alpha-D-ribose 1-phosphate: step 3/6. It functions in the pathway amino-acid biosynthesis; L-methionine biosynthesis via salvage pathway; L-methionine from S-methyl-5-thio-alpha-D-ribose 1-phosphate: step 4/6. Its function is as follows. Bifunctional enzyme that catalyzes the enolization of 2,3-diketo-5-methylthiopentyl-1-phosphate (DK-MTP-1-P) into the intermediate 2-hydroxy-3-keto-5-methylthiopentenyl-1-phosphate (HK-MTPenyl-1-P), which is then dephosphorylated to form the acireductone 1,2-dihydroxy-3-keto-5-methylthiopentene (DHK-MTPene). The chain is Enolase-phosphatase E1 from Acyrthosiphon pisum (Pea aphid).